The following is a 331-amino-acid chain: Type 2 lactosamine alpha-2,3-sialyltransferase (331 aa).

Topologically, residues 1-4 (MRGY) are cytoplasmic. A helical; Signal-anchor for type II membrane protein transmembrane segment spans residues 5 to 25 (LVAIFLSAVFLYYVLHCILWG). The Lumenal portion of the chain corresponds to 26–331 (TNVYWVAPVE…KNLVINLTQD (306 aa)). N129, N181, N282, N295, N308, and N327 each carry an N-linked (GlcNAc...) asparagine glycan.

The protein belongs to the glycosyltransferase 29 family. Ubiquitous.

Its subcellular location is the golgi apparatus membrane. The catalysed reaction is a neolactoside nLc4Cer(d18:1(4E)) + CMP-N-acetyl-beta-neuraminate = a neolactoside IV(3)-alpha-NeuAc-nLc4Cer(d18:1(4E)) + CMP + H(+). It carries out the reaction a beta-D-galactosyl-(1-&gt;4)-N-acetyl-beta-D-glucosaminyl derivative + CMP-N-acetyl-beta-neuraminate = an N-acetyl-alpha-neuraminyl-(2-&gt;3)-beta-D-galactosyl-(1-&gt;4)-N-acetyl-beta-D-glucosaminyl derivative + CMP + H(+). The enzyme catalyses a neolactoside nLc6Cer(d18:1(4E)) + CMP-N-acetyl-beta-neuraminate = a neolactoside VI(3)-alpha-NeuNAc-nLc6Cer(d18:1(4E)) + CMP + H(+). In terms of biological role, transfers the sialyl residue from CMP-N-acetyl-beta-neuraminate to the terminal galactose residue on sugar chains of glycoproteins and glycolipids. It's alpha-2,3-sialyltransferase activity is specific toward type II glycan chains (Galbeta1-4GlcNAc) on glycoproteins and glycolipids such as neolactosides nLc4Cer and nLc6Cer, whose sialyl-products serve as precursors for the Lewis X antigen. Critically involved in the synthesis of functional selectin ligands needed for neutrophil recruitment during inflammation and lymphocyte homing to the lymph nodes. The protein is Type 2 lactosamine alpha-2,3-sialyltransferase (ST3GAL6) of Homo sapiens (Human).